Consider the following 1031-residue polypeptide: MTNKISFRDIINRKDWENPVITNWHRLPIHTEMNYSKSLNEDKQKTIQSLNGNWCFSYFSKVTDVPENWADRDLTKSNIMPVPSNWQLHGYDQPIYSNVAYPFPANPPYLPEENPTACYSRIFQLNDDWLQSGQNHVIFNGVGSAFHLWLNGQWIGYSEDSRLPAEFDLTKYLKSGKNRISVMVLRWSKGSYFEDQDMWRMSGIFRDVEVKHLPATYLQDYQLQTDLDDDLDQAKITIKAQVAGKNFSQNKLRTRLYFANEKVADQSSRLSTRAVDERGPLDNQFIAELNLKDPYLWSAELPYLYQLVIELLTDDGDILQVEKVNIGVRKVEIKNGLLKLNGKPLLIRGTNKHEFDSKKGYAVDEETMIQDIKAMKRNNFNAVRCSHYPNNRRWYELCDQYGLYVVDEANIETHGMVPMNRLTNDPVYLPLMSDRVTRMVTRDRNHPSIIIWSLGNESGYGRNHAALYNWIKQSDLSRPVQYEGGGANTAVTDIIVPMYARVEQDQIESVNSKWSLKKWIGLPGETRPLILCEYAHDMGNSLGGFGKYWQAFHKYPRLQGGFIWDWVDQGLLKKDVNGNDFYAYGGDFKDQPNDRQFCLDGLLFPDRTPKPAMHEVKYWQQYYLFNLQRNPLGQAESFTVTNDYSFKKSSNERLHYQIKSENEIVIDKYIDLVLNPGESLLIKLPKGRSSTSSLLDIDISLIKGNSWAPSGFKIASEQYVLAKKFGPTNAVTAATNKISLIENKDTNTFEIKLDDQKWQFAKNSGLLVSWSKSGNENLLDALRDQFTRAPLDNDIGVSKVDHIDPNAWYERWKSAGMYNLKTNLVSIDAEQLERAVLIRTEHSYSNHFQILFKSSKIYRIDANGTMTVTVDVSLAQGIPFPARIGLTCHLADQITDVSYTGLGPFENYPDRQSAAQYGHWQMELDDLYTPYIFPSENGSRGQVSQLEFGKQKISAYHEQNFSFNLSRFSKQQLARISHRNLLQAENGVWLSIDGYRMGVGGDDSWSPSVAPEYLLSNNYYHYAFQWCRKDI.

Residues Asn-98 and Asp-197 each contribute to the substrate site. A Na(+)-binding site is contributed by Asp-197. Positions 412, 414, and 457 each coordinate Mg(2+). Residues Glu-457 and 533–536 (EYAH) contribute to the substrate site. Residue Glu-457 is the Proton donor of the active site. The active-site Nucleophile is the Glu-533. A Mg(2+)-binding site is contributed by Asn-593. Na(+) contacts are provided by Phe-597 and Asp-600. Substrate-binding residues include Asp-600 and Trp-1005.

The protein belongs to the glycosyl hydrolase 2 family. Homotetramer. Requires Mg(2+) as cofactor. Na(+) is required as a cofactor.

It catalyses the reaction Hydrolysis of terminal non-reducing beta-D-galactose residues in beta-D-galactosides.. This chain is Beta-galactosidase, found in Oenococcus oeni (strain ATCC BAA-331 / PSU-1).